A 285-amino-acid chain; its full sequence is ATP phosphoribosyltransferase (285 aa).

This sequence belongs to the ATP phosphoribosyltransferase family. Long subfamily. Mg(2+) is required as a cofactor.

The protein localises to the cytoplasm. It carries out the reaction 1-(5-phospho-beta-D-ribosyl)-ATP + diphosphate = 5-phospho-alpha-D-ribose 1-diphosphate + ATP. It functions in the pathway amino-acid biosynthesis; L-histidine biosynthesis; L-histidine from 5-phospho-alpha-D-ribose 1-diphosphate: step 1/9. Its activity is regulated as follows. Feedback inhibited by histidine. Its function is as follows. Catalyzes the condensation of ATP and 5-phosphoribose 1-diphosphate to form N'-(5'-phosphoribosyl)-ATP (PR-ATP). Has a crucial role in the pathway because the rate of histidine biosynthesis seems to be controlled primarily by regulation of HisG enzymatic activity. The sequence is that of ATP phosphoribosyltransferase from Sulfolobus acidocaldarius (strain ATCC 33909 / DSM 639 / JCM 8929 / NBRC 15157 / NCIMB 11770).